The primary structure comprises 362 residues: Hydroxycarboxylate dehydrogenase A (362 aa).

Residues aspartate 173, histidine 257, and histidine 274 each contribute to the Zn(2+) site.

The protein belongs to the iron-containing alcohol dehydrogenase family. The cofactor is Zn(2+).

The catalysed reaction is 2-hydroxybutanoate + NADP(+) = 2-oxobutanoate + NADPH + H(+). It catalyses the reaction 2-hydroxyglutarate + NADP(+) = 2-oxoglutarate + NADPH + H(+). Functionally, catalyzes the NADPH-dependent reduction of 2-oxoglutarate and 2-oxobutanoate, leading to the respective 2-hydroxycarboxylate. Cannot use NADH instead of NADPH as a redox partner. Do not catalyze the reverse reactions. The protein is Hydroxycarboxylate dehydrogenase A of Escherichia coli (strain K12).